The chain runs to 295 residues: Protoheme IX farnesyltransferase (295 aa).

9 consecutive transmembrane segments (helical) span residues 8 to 28 (ITKP…FFLA), 35 to 55 (GGLF…GCVF), 83 to 103 (GVTL…LWFG), 107 to 127 (LATA…SLYL), 132 to 152 (IYGT…GYCA), 162 to 182 (LTLL…IAIF), 208 to 228 (IFWY…GGYA), 229 to 249 (GYGY…MALR), and 263 to 283 (VFIF…IDFQ).

This sequence belongs to the UbiA prenyltransferase family. Protoheme IX farnesyltransferase subfamily.

The protein localises to the cell inner membrane. It catalyses the reaction heme b + (2E,6E)-farnesyl diphosphate + H2O = Fe(II)-heme o + diphosphate. Its pathway is porphyrin-containing compound metabolism; heme O biosynthesis; heme O from protoheme: step 1/1. Functionally, converts heme B (protoheme IX) to heme O by substitution of the vinyl group on carbon 2 of heme B porphyrin ring with a hydroxyethyl farnesyl side group. The polypeptide is Protoheme IX farnesyltransferase (Chromohalobacter salexigens (strain ATCC BAA-138 / DSM 3043 / CIP 106854 / NCIMB 13768 / 1H11)).